The sequence spans 117 residues: DNA-directed RNA polymerase subunit omega (117 aa).

Residues 96 to 105 (KEEAEEEAKQ) show a composition bias toward basic and acidic residues. The interval 96-117 (KEEAEEEAKQKNSRAAKAAAAE) is disordered. The segment covering 108–117 (SRAAKAAAAE) has biased composition (low complexity).

The protein belongs to the RNA polymerase subunit omega family. The RNAP catalytic core consists of 2 alpha, 1 beta, 1 beta' and 1 omega subunit. When a sigma factor is associated with the core the holoenzyme is formed, which can initiate transcription.

It catalyses the reaction RNA(n) + a ribonucleoside 5'-triphosphate = RNA(n+1) + diphosphate. Its function is as follows. Promotes RNA polymerase assembly. Latches the N- and C-terminal regions of the beta' subunit thereby facilitating its interaction with the beta and alpha subunits. This Lactococcus lactis subsp. cremoris (strain SK11) protein is DNA-directed RNA polymerase subunit omega.